A 313-amino-acid chain; its full sequence is Cytochrome c biogenesis protein CcsA (313 aa).

Helical transmembrane passes span 13-35 (ISFSIISIVITTHLMTFAREIAG), 43-63 (GMIAVFLRITGLLVTRWIYSG), 67-87 (LSNLYESLIFLSWGFSLIHMI), 96-116 (FLSSITAPSAILTQGFVTSGL), 142-162 (MLLSYAALLCGSLLSIALLVI), 219-239 (VIGIGFTLLTLGILSGAVWAN), 252-269 (ETWAFITWTISAIYLHTR), and 280-300 (AIVASIGFLIIWICYFGVNLL).

The protein belongs to the CcmF/CycK/Ccl1/NrfE/CcsA family. As to quaternary structure, may interact with Ccs1.

It is found in the plastid. The protein localises to the chloroplast thylakoid membrane. Required during biogenesis of c-type cytochromes (cytochrome c6 and cytochrome f) at the step of heme attachment. The polypeptide is Cytochrome c biogenesis protein CcsA (Amborella trichopoda).